A 171-amino-acid chain; its full sequence is MAEEYSWDSYLNDRLLATNQVSGAGLASEEDGVVYACVAQGEESDPNFDKWSLFYKEDYDIEVEDENGTKTTKTINEGQTILVVFNEGYAPDGVWLGGTKYQFINIERDLEFEGYNFDVATCAKLKGGLHLVKVPGGNILVVLYDEEKEQDRGNSKIAALTFAKELAESSQ.

The pro-rich sequence-binding stretch occupies residues 5–10 (YSWDSY). The Plasmodium-specific profilin mini-domain signature appears at 48-54 (FDKWSLF). 2 actin-binding regions span residues 100-112 (KYQF…DLEF) and 152-156 (RGNSK).

The protein belongs to the profilin family. Binds actin.

The protein localises to the cytoplasm. It localises to the cytoskeleton. In terms of biological role, essential for the invasive blood stages of the parasite. Binds to proline rich sequences in various regulatory formin-like proteins and also to membrane phospholipids. Binds to actin and affects the structure of the cytoskeleton. Weakly sequesters actin monomers. This is Profilin from Plasmodium falciparum (isolate 3D7).